We begin with the raw amino-acid sequence, 164 residues long: UPF0114 protein Spro_2386 (164 aa).

The next 3 helical transmembrane spans lie at 15–35 (LLAPVYFGLSLALLALSIKFF), 53–73 (LVLTLLSLIDMALVGGLLVMV), and 136–156 (LMWYVIIHLTFVLSAFVMGYL).

Belongs to the UPF0114 family.

It localises to the cell membrane. In Serratia proteamaculans (strain 568), this protein is UPF0114 protein Spro_2386.